The primary structure comprises 305 residues: UDP-3-O-acyl-N-acetylglucosamine deacetylase (305 aa).

Zn(2+)-binding residues include His78, His237, and Asp241. His264 (proton donor) is an active-site residue.

The protein belongs to the LpxC family. Zn(2+) serves as cofactor.

It carries out the reaction a UDP-3-O-[(3R)-3-hydroxyacyl]-N-acetyl-alpha-D-glucosamine + H2O = a UDP-3-O-[(3R)-3-hydroxyacyl]-alpha-D-glucosamine + acetate. Its pathway is glycolipid biosynthesis; lipid IV(A) biosynthesis; lipid IV(A) from (3R)-3-hydroxytetradecanoyl-[acyl-carrier-protein] and UDP-N-acetyl-alpha-D-glucosamine: step 2/6. In terms of biological role, catalyzes the hydrolysis of UDP-3-O-myristoyl-N-acetylglucosamine to form UDP-3-O-myristoylglucosamine and acetate, the committed step in lipid A biosynthesis. The polypeptide is UDP-3-O-acyl-N-acetylglucosamine deacetylase (Burkholderia lata (strain ATCC 17760 / DSM 23089 / LMG 22485 / NCIMB 9086 / R18194 / 383)).